Here is a 226-residue protein sequence, read N- to C-terminus: Large ribosomal subunit protein uL1 (226 aa).

This sequence belongs to the universal ribosomal protein uL1 family. As to quaternary structure, part of the 50S ribosomal subunit.

In terms of biological role, binds directly to 23S rRNA. The L1 stalk is quite mobile in the ribosome, and is involved in E site tRNA release. Its function is as follows. Protein L1 is also a translational repressor protein, it controls the translation of the L11 operon by binding to its mRNA. The protein is Large ribosomal subunit protein uL1 of Mycoplasmoides gallisepticum (strain R(low / passage 15 / clone 2)) (Mycoplasma gallisepticum).